The sequence spans 178 residues: ATP synthase subunit delta (178 aa).

The protein belongs to the ATPase delta chain family. As to quaternary structure, F-type ATPases have 2 components, F(1) - the catalytic core - and F(0) - the membrane proton channel. F(1) has five subunits: alpha(3), beta(3), gamma(1), delta(1), epsilon(1). F(0) has three main subunits: a(1), b(2) and c(10-14). The alpha and beta chains form an alternating ring which encloses part of the gamma chain. F(1) is attached to F(0) by a central stalk formed by the gamma and epsilon chains, while a peripheral stalk is formed by the delta and b chains.

The protein localises to the cell membrane. Its function is as follows. F(1)F(0) ATP synthase produces ATP from ADP in the presence of a proton or sodium gradient. F-type ATPases consist of two structural domains, F(1) containing the extramembraneous catalytic core and F(0) containing the membrane proton channel, linked together by a central stalk and a peripheral stalk. During catalysis, ATP synthesis in the catalytic domain of F(1) is coupled via a rotary mechanism of the central stalk subunits to proton translocation. In terms of biological role, this protein is part of the stalk that links CF(0) to CF(1). It either transmits conformational changes from CF(0) to CF(1) or is implicated in proton conduction. This Streptococcus pneumoniae (strain CGSP14) protein is ATP synthase subunit delta.